Here is a 180-residue protein sequence, read N- to C-terminus: Large ribosomal subunit protein uL6 (180 aa).

Belongs to the universal ribosomal protein uL6 family. As to quaternary structure, part of the 50S ribosomal subunit.

In terms of biological role, this protein binds to the 23S rRNA, and is important in its secondary structure. It is located near the subunit interface in the base of the L7/L12 stalk, and near the tRNA binding site of the peptidyltransferase center. This Clostridium botulinum (strain 657 / Type Ba4) protein is Large ribosomal subunit protein uL6.